Consider the following 768-residue polypeptide: Protein transport protein Sec23A (768 aa).

Position 2 is an N-acetylthreonine (Thr2). Zn(2+) contacts are provided by Cys61, Cys66, Cys85, and Cys88. Thr308 is subject to Phosphothreonine. A Gelsolin-like repeat occupies 632-718 (PEPVLLDSSS…EHGGSQARFL (87 aa)).

This sequence belongs to the SEC23/SEC24 family. SEC23 subfamily. COPII is composed of at least five proteins: the Sec23/24 complex, the Sec13/31 complex and Sar1. Interacts with SEC23IP. Interacts with HTR4. Interacts with SEC16A. Interacts with SLC6A4. Interacts (as part of the Sec23/24 complex) with SEC22B; recruits SEC22B into COPII-coated vesicles and allows the transport of this cargo from the endoplasmic reticulum to the Golgi. Interacts (via Gelsolin-like repeat) with MIA2 and MIA3; specifically involved in the transport of large cargos like the collagen COL7A1. Interacts with DDHD1. Interacts with TMEM39A. Interacts with SACM1L; this interaction is reduced in the absence of TMEM39A. Interacts with kinase FAM20C; transport of FAM20C from the endoplasmic reticulum to the Golgi is likely to be mediated by COPII vesicles.

The protein localises to the cytoplasmic vesicle. It localises to the COPII-coated vesicle membrane. It is found in the endoplasmic reticulum membrane. Its subcellular location is the cytoplasm. The protein resides in the cytosol. Functionally, component of the coat protein complex II (COPII) which promotes the formation of transport vesicles from the endoplasmic reticulum (ER). The coat has two main functions, the physical deformation of the endoplasmic reticulum membrane into vesicles and the selection of cargo molecules for their transport to the Golgi complex. Required for the translocation of insulin-induced glucose transporter SLC2A4/GLUT4 to the cell membrane. This Bos taurus (Bovine) protein is Protein transport protein Sec23A.